The following is a 701-amino-acid chain: Rab-like protein 6 (701 aa).

The residue at position 1 (Met-1) is an N-acetylmethionine. A small GTPase-like region spans residues 39–279; that stretch reads GVQYNMKIVI…IFLEMMEARS (241 aa). GTP is bound by residues 50–57, 100–104, and 177–179; these read GDRNTGKT, DVVDK, and YRD. A disordered region spans residues 279–701; it reads SRGHASPLTT…LRGGGDYEAL (423 aa). Over residues 284-315 the composition is skewed to low complexity; the sequence is SPLTTSGQSPSSGSQSPVVPPSTVSTGSSSPS. Residues 316–344 are compositionally biased toward pro residues; the sequence is TPQPVLQPPLQAPPAPPAPAEAPPLPAAP. Residues Ser-394, Ser-416, Ser-418, Ser-461, and Ser-462 each carry the phosphoserine modification. A compositionally biased stretch (low complexity) spans 495–506; sequence ALGPPRDAAPRA. Ser-552 bears the Phosphoserine mark. Residues 555–569 show a composition bias toward basic and acidic residues; it reads DAQRRAGEFPVREDL. At Ser-570 the chain carries Phosphoserine. The residue at position 573 (Thr-573) is a Phosphothreonine. Residues 580-589 show a composition bias toward pro residues; that stretch reads VQPPAPPKPL. Residues 608-626 are compositionally biased toward basic and acidic residues; it reads EPGREDSSEQDKEGRPPAK. 2 positions are modified to phosphoserine: Ser-614 and Ser-615. Positions 629 to 667 are interaction with CDKN2A; sequence KKKKKKGREEEDKAAKKRSKHKKSRERADDKGRDERRRR. The segment covering 643–653 has biased composition (basic residues); it reads AKKRSKHKKSR. The segment covering 654-665 has biased composition (basic and acidic residues); that stretch reads ERADDKGRDERR. The span at 683–701 shows a compositional bias: gly residues; that stretch reads LGGGAPSGPLRGGGDYEAL.

The protein belongs to the small GTPase superfamily. Rab family.

It is found in the nucleus. It localises to the cytoplasm. In terms of biological role, may enhance cellular proliferation. May reduce growth inhibitory activity of CDKN2A. The chain is Rab-like protein 6 (RABL6) from Bos taurus (Bovine).